Consider the following 246-residue polypeptide: 2-deoxyglucose-6-phosphate phosphatase 1 (246 aa).

The Nucleophile role is filled by D83. Residue D83 participates in Mg(2+) binding. Substrate contacts are provided by residues D83, E92, and 146–149 (DVKN). D183 contributes to the Mg(2+) binding site.

Belongs to the HAD-like hydrolase superfamily. DOG/GPP family. It depends on Mg(2+) as a cofactor.

It catalyses the reaction 2-deoxy-D-glucose 6-phosphate + H2O = 2-deoxy-D-glucose + phosphate. Its function is as follows. Phosphatase that is active on 2-deoxy-D-glucose 6-phosphate (2-DOG-6P), as well as on fructose-1-P. This is 2-deoxyglucose-6-phosphate phosphatase 1 from Saccharomyces cerevisiae (strain ATCC 204508 / S288c) (Baker's yeast).